The primary structure comprises 257 residues: Transmembrane protein C257L (257 aa).

2 consecutive transmembrane segments (helical) span residues 123-143 and 163-183; these read LELL…FTAL and MMIF…YVLV.

This sequence belongs to the asfivirus C257R family.

The protein localises to the host membrane. The protein resides in the virion. The sequence is that of Transmembrane protein C257L from African swine fever virus (strain Badajoz 1971 Vero-adapted) (Ba71V).